A 254-amino-acid polypeptide reads, in one-letter code: uncharacterized protein (254 aa).

Belongs to the methyltransferase superfamily.

This is an uncharacterized protein from Mycobacterium tuberculosis (strain ATCC 25177 / H37Ra).